Here is a 273-residue protein sequence, read N- to C-terminus: Large ribosomal subunit protein uL2 (273 aa).

Disordered stretches follow at residues 34-54 and 223-273; these read LEKK…TRHI and VAMN…RRRK.

This sequence belongs to the universal ribosomal protein uL2 family. In terms of assembly, part of the 50S ribosomal subunit. Forms a bridge to the 30S subunit in the 70S ribosome.

Functionally, one of the primary rRNA binding proteins. Required for association of the 30S and 50S subunits to form the 70S ribosome, for tRNA binding and peptide bond formation. It has been suggested to have peptidyltransferase activity; this is somewhat controversial. Makes several contacts with the 16S rRNA in the 70S ribosome. The sequence is that of Large ribosomal subunit protein uL2 from Azotobacter vinelandii (strain DJ / ATCC BAA-1303).